The primary structure comprises 283 residues: Ribosomal RNA small subunit methyltransferase A (283 aa).

S-adenosyl-L-methionine contacts are provided by N13, L15, G39, E59, D87, and N108.

The protein belongs to the class I-like SAM-binding methyltransferase superfamily. rRNA adenine N(6)-methyltransferase family. RsmA subfamily.

It localises to the cytoplasm. The enzyme catalyses adenosine(1518)/adenosine(1519) in 16S rRNA + 4 S-adenosyl-L-methionine = N(6)-dimethyladenosine(1518)/N(6)-dimethyladenosine(1519) in 16S rRNA + 4 S-adenosyl-L-homocysteine + 4 H(+). Its function is as follows. Specifically dimethylates two adjacent adenosines (A1518 and A1519) in the loop of a conserved hairpin near the 3'-end of 16S rRNA in the 30S particle. May play a critical role in biogenesis of 30S subunits. This is Ribosomal RNA small subunit methyltransferase A from Helicobacter hepaticus (strain ATCC 51449 / 3B1).